We begin with the raw amino-acid sequence, 146 residues long: Large ribosomal subunit protein uL11 (146 aa).

Belongs to the universal ribosomal protein uL11 family. As to quaternary structure, part of the ribosomal stalk of the 50S ribosomal subunit. Interacts with L10 and the large rRNA to form the base of the stalk. L10 forms an elongated spine to which L12 dimers bind in a sequential fashion forming a multimeric L10(L12)X complex. In terms of processing, one or more lysine residues are methylated.

Its function is as follows. Forms part of the ribosomal stalk which helps the ribosome interact with GTP-bound translation factors. This Salinibacter ruber (strain DSM 13855 / M31) protein is Large ribosomal subunit protein uL11.